The chain runs to 319 residues: Acetyl esterase (319 aa).

The short motif at 91–93 (HGG) is the Involved in the stabilization of the negatively charged intermediate by the formation of the oxyanion hole element. Active-site residues include Ser165, Asp262, and His292.

This sequence belongs to the 'GDXG' lipolytic enzyme family. As to quaternary structure, homodimer. Interacts with MalT and MelA.

The protein resides in the cytoplasm. Functionally, displays esterase activity towards short chain fatty esters (acyl chain length of up to 8 carbons). Able to hydrolyze triacetylglycerol (triacetin) and tributyrylglycerol (tributyrin), but not trioleylglycerol (triolein) or cholesterol oleate. Negatively regulates MalT activity by antagonizing maltotriose binding. Inhibits MelA galactosidase activity. In Escherichia coli O9:H4 (strain HS), this protein is Acetyl esterase.